A 331-amino-acid chain; its full sequence is 6-phosphogluconolactonase (331 aa).

The protein belongs to the cycloisomerase 2 family.

The catalysed reaction is 6-phospho-D-glucono-1,5-lactone + H2O = 6-phospho-D-gluconate + H(+). Its pathway is carbohydrate degradation; pentose phosphate pathway; D-ribulose 5-phosphate from D-glucose 6-phosphate (oxidative stage): step 2/3. Functionally, catalyzes the hydrolysis of 6-phosphogluconolactone to 6-phosphogluconate. This Salmonella paratyphi A (strain ATCC 9150 / SARB42) protein is 6-phosphogluconolactonase.